Consider the following 309-residue polypeptide: Ribonuclease Z (309 aa).

Histidine 63, histidine 65, aspartate 67, histidine 68, histidine 145, aspartate 216, and histidine 274 together coordinate Zn(2+). Aspartate 67 (proton acceptor) is an active-site residue.

It belongs to the RNase Z family. Homodimer. The cofactor is Zn(2+).

It catalyses the reaction Endonucleolytic cleavage of RNA, removing extra 3' nucleotides from tRNA precursor, generating 3' termini of tRNAs. A 3'-hydroxy group is left at the tRNA terminus and a 5'-phosphoryl group is left at the trailer molecule.. Zinc phosphodiesterase, which displays some tRNA 3'-processing endonuclease activity. Probably involved in tRNA maturation, by removing a 3'-trailer from precursor tRNA. The polypeptide is Ribonuclease Z (Streptococcus pyogenes serotype M6 (strain ATCC BAA-946 / MGAS10394)).